Here is a 682-residue protein sequence, read N- to C-terminus: Potassium-transporting ATPase ATP-binding subunit (682 aa).

A run of 4 helical transmembrane segments spans residues 34–54 (PVMF…LAMV), 58–78 (IAGS…TVLF), 219–239 (IALT…TATL), and 254–274 (VLVA…LSAI). The 4-aspartylphosphate intermediate role is filled by Asp307. Residues Asp344, Glu348, 377-384 (FTAQSRMS), and Lys395 contribute to the ATP site. 2 residues coordinate Mg(2+): Asp518 and Asp522. 3 helical membrane passes run 588–608 (FAII…LNVM), 616–636 (AILS…PLAL), and 662–682 (LVVP…LGLA).

It belongs to the cation transport ATPase (P-type) (TC 3.A.3) family. Type IA subfamily. As to quaternary structure, the system is composed of three essential subunits: KdpA, KdpB and KdpC.

The protein resides in the cell inner membrane. It carries out the reaction K(+)(out) + ATP + H2O = K(+)(in) + ADP + phosphate + H(+). In terms of biological role, part of the high-affinity ATP-driven potassium transport (or Kdp) system, which catalyzes the hydrolysis of ATP coupled with the electrogenic transport of potassium into the cytoplasm. This subunit is responsible for energy coupling to the transport system and for the release of the potassium ions to the cytoplasm. The chain is Potassium-transporting ATPase ATP-binding subunit from Salmonella paratyphi B (strain ATCC BAA-1250 / SPB7).